The following is a 230-amino-acid chain: 2,3-bisphosphoglycerate-dependent phosphoglycerate mutase (230 aa).

Residues 8–15 (RHGESEWN), 21–22 (TG), R60, 87–90 (ERHY), K98, 114–115 (RR), and 183–184 (GN) contribute to the substrate site. Residue H9 is the Tele-phosphohistidine intermediate of the active site. The active-site Proton donor/acceptor is E87.

It belongs to the phosphoglycerate mutase family. BPG-dependent PGAM subfamily.

It carries out the reaction (2R)-2-phosphoglycerate = (2R)-3-phosphoglycerate. It functions in the pathway carbohydrate degradation; glycolysis; pyruvate from D-glyceraldehyde 3-phosphate: step 3/5. In terms of biological role, catalyzes the interconversion of 2-phosphoglycerate and 3-phosphoglycerate. In Streptococcus pneumoniae (strain ATCC BAA-255 / R6), this protein is 2,3-bisphosphoglycerate-dependent phosphoglycerate mutase.